The chain runs to 171 residues: HTH-type transcriptional regulator AldR (171 aa).

The span at 1-14 shows a compositional bias: polar residues; the sequence is MSEGSSITGVQTPG. Positions 1–21 are disordered; sequence MSEGSSITGVQTPGSPKDVRA. Residues 24–85 enclose the HTH asnC-type domain; that stretch reads LDDIDRRILL…DIDPAAVGLG (62 aa). The segment at residues 43–62 is a DNA-binding region (H-T-H motif); sequence NSALAEMVGIAPSTCHGRVR.

Homodimer in the absence of L-alanine. Homooctamer in the presence of L-alanine. Homotetramers in the presence of L-cysteine.

Its activity is regulated as follows. In the presence of alanine, AldR changes its quaternary structure from a homodimer to an octamer with an open-ring conformation. The binding affinity of AldR for the ald control region is increased significantly by L-alanine. In vitro, L-cysteine also increases the binding affinity of AldR for the target DNA. Transcriptional regulator that might play a role under hypoxic conditions. Regulates the expression of ald, which encodes L-alanine dehydrogenase. Serves as both an activator for ald expression in the presence of L-alanine and a repressor in the absence of L-alanine. Acts by binding directly to the upstream region of the ald gene. Four AldR-binding sites (O2, O1, O4 and O3) were identified upstream of the ald gene. O2, O1 and O4 are required for the induction of ald expression by alanine, while O3 is directly involved in the repression of ald expression, by occluding the access of RNA polymerase to the ald promoter. In addition to O3, both O1 and O4 are also necessary for full repression of ald expression in the absence of alanine. The chain is HTH-type transcriptional regulator AldR from Mycolicibacterium smegmatis (strain ATCC 700084 / mc(2)155) (Mycobacterium smegmatis).